The chain runs to 122 residues: Large ribosomal subunit protein uL14 (122 aa).

The protein belongs to the universal ribosomal protein uL14 family. In terms of assembly, part of the 50S ribosomal subunit. Forms a cluster with proteins L3 and L19. In the 70S ribosome, L14 and L19 interact and together make contacts with the 16S rRNA in bridges B5 and B8.

Binds to 23S rRNA. Forms part of two intersubunit bridges in the 70S ribosome. This chain is Large ribosomal subunit protein uL14, found in Francisella philomiragia subsp. philomiragia (strain ATCC 25017 / CCUG 19701 / FSC 153 / O#319-036).